We begin with the raw amino-acid sequence, 438 residues long: ATP-dependent protease ATPase subunit HslU (438 aa).

ATP is bound by residues Val-18, 60–65 (GVGKTE), Asp-252, Glu-317, and Arg-389.

This sequence belongs to the ClpX chaperone family. HslU subfamily. In terms of assembly, a double ring-shaped homohexamer of HslV is capped on each side by a ring-shaped HslU homohexamer. The assembly of the HslU/HslV complex is dependent on binding of ATP.

The protein localises to the cytoplasm. ATPase subunit of a proteasome-like degradation complex; this subunit has chaperone activity. The binding of ATP and its subsequent hydrolysis by HslU are essential for unfolding of protein substrates subsequently hydrolyzed by HslV. HslU recognizes the N-terminal part of its protein substrates and unfolds these before they are guided to HslV for hydrolysis. This is ATP-dependent protease ATPase subunit HslU from Saccharophagus degradans (strain 2-40 / ATCC 43961 / DSM 17024).